The following is a 717-amino-acid chain: ATP-dependent RNA helicase homolog DQX1 (717 aa).

In terms of domain architecture, Helicase ATP-binding spans Gln57–Pro225. Gly70–Ser77 provides a ligand contact to ATP. Residues Asp170–Gln173 carry the DEAQ box motif. One can recognise a Helicase C-terminal domain in the interval Ala248–Asp447. The interval Gly694–Gln717 is disordered. The span at Thr699–Gln708 shows a compositional bias: polar residues.

Its subcellular location is the nucleus. Might be involved in RNA metabolism; it is missing helicase motif III and may not have helicase activity. The polypeptide is ATP-dependent RNA helicase homolog DQX1 (DQX1) (Homo sapiens (Human)).